The primary structure comprises 147 residues: Nucleoside diphosphate kinase (147 aa).

Positions 11, 59, 87, 93, 104, and 114 each coordinate ATP. The active-site Pros-phosphohistidine intermediate is His-117.

This sequence belongs to the NDK family. As to quaternary structure, homotetramer. Requires Mg(2+) as cofactor.

The protein localises to the cytoplasm. The enzyme catalyses a 2'-deoxyribonucleoside 5'-diphosphate + ATP = a 2'-deoxyribonucleoside 5'-triphosphate + ADP. The catalysed reaction is a ribonucleoside 5'-diphosphate + ATP = a ribonucleoside 5'-triphosphate + ADP. Functionally, major role in the synthesis of nucleoside triphosphates other than ATP. The ATP gamma phosphate is transferred to the NDP beta phosphate via a ping-pong mechanism, using a phosphorylated active-site intermediate. This chain is Nucleoside diphosphate kinase, found in Anaeromyxobacter dehalogenans (strain 2CP-1 / ATCC BAA-258).